We begin with the raw amino-acid sequence, 276 residues long: Elongation factor Ts (276 aa).

The segment at 80 to 83 is involved in Mg(2+) ion dislocation from EF-Tu; sequence TDFV.

Belongs to the EF-Ts family.

Its subcellular location is the cytoplasm. Functionally, associates with the EF-Tu.GDP complex and induces the exchange of GDP to GTP. It remains bound to the aminoacyl-tRNA.EF-Tu.GTP complex up to the GTP hydrolysis stage on the ribosome. In Kocuria rhizophila (strain ATCC 9341 / DSM 348 / NBRC 103217 / DC2201), this protein is Elongation factor Ts.